A 345-amino-acid chain; its full sequence is Phosphoribosylformylglycinamidine cyclo-ligase (345 aa).

Belongs to the AIR synthase family.

It is found in the cytoplasm. It carries out the reaction 2-formamido-N(1)-(5-O-phospho-beta-D-ribosyl)acetamidine + ATP = 5-amino-1-(5-phospho-beta-D-ribosyl)imidazole + ADP + phosphate + H(+). It functions in the pathway purine metabolism; IMP biosynthesis via de novo pathway; 5-amino-1-(5-phospho-D-ribosyl)imidazole from N(2)-formyl-N(1)-(5-phospho-D-ribosyl)glycinamide: step 2/2. The chain is Phosphoribosylformylglycinamidine cyclo-ligase from Limosilactobacillus fermentum (strain NBRC 3956 / LMG 18251) (Lactobacillus fermentum).